Here is a 152-residue protein sequence, read N- to C-terminus: Alpha-amylase inhibitor BDAI-1 (152 aa).

A signal peptide spans 1–30 (MGAMWMKSMLLVLLLCMLMVTPMTGARSDN).

The protein belongs to the protease inhibitor I6 (cereal trypsin/alpha-amylase inhibitor) family. Homodimer. In terms of processing, five disulfide bonds, which are essential for the inhibitor activity, are probably present. In terms of tissue distribution, endosperm.

It localises to the secreted. In terms of biological role, could be involved in insect defense mechanisms. Inhibits insect-type alpha-amylase. The protein is Alpha-amylase inhibitor BDAI-1 (IAD1) of Hordeum vulgare (Barley).